The following is a 786-amino-acid chain: DENN domain-containing protein 1C (786 aa).

Residues 13-158 (FDWFFEAGCP…MDSSITVRSE (146 aa)) form the uDENN domain. The cDENN domain occupies 182–318 (SLPSIPENRN…VVSLLRLRLR (137 aa)). One can recognise a dDENN domain in the interval 320–398 (VALSPGEGVS…ESRLEKLNAG (79 aa)). The FXDXF motif motif lies at 401–405 (FSDQF). Residues 481–553 (KDGDSGLQRG…LSPGDTQNPW (73 aa)) form a disordered region. Over residues 527 to 541 (LKTEEGPSEPLRERS) the composition is skewed to basic and acidic residues. The segment covering 542 to 552 (PTLSPGDTQNP) has biased composition (polar residues). S565 bears the Phosphoserine mark. Residues 570–579 (DLLSEILDSL) carry the Clathrin box motif. Disordered stretches follow at residues 653–741 (YSKN…QPPQ) and 762–786 (SHVS…CFEN). Over residues 657–675 (SCSQPFQQSPPSQGDPGPS) the composition is skewed to low complexity. Over residues 706–740 (LLVSTEPNSDAVQRLQSISSPSCSHSAENPRNQPP) the composition is skewed to polar residues. The span at 770-786 (PQDKQPRVADLKKCFEN) shows a compositional bias: basic and acidic residues.

Exhibits low nucleotide-independent RAB35-binding activity. Interacts with clathrin heavy chain/CLTC and with AP2A2, but not with AP2B1.

Its subcellular location is the cytoplasm. The protein localises to the cytosol. The protein resides in the cytoplasmic vesicle. It is found in the clathrin-coated vesicle. In terms of biological role, guanine nucleotide exchange factor (GEF) which may activate RAB8A, RAB13 and RAB35. Promotes the exchange of GDP to GTP, converting inactive GDP-bound Rab proteins into their active GTP-bound form. This is DENN domain-containing protein 1C (Dennd1c) from Mus musculus (Mouse).